The primary structure comprises 361 residues: uncharacterized protein (361 aa).

A compositionally biased stretch (basic residues) spans 1–10 (MRRYLKKAKP). Disordered regions lie at residues 1-82 (MRRY…SSFH) and 94-147 (ALSH…VNTS). Basic and acidic residues-rich tracts occupy residues 44 to 57 (KEKN…KYEN) and 120 to 134 (FTKK…ESEL). Polar residues predominate over residues 135 to 147 (QTRSSPPLPVNTS). Residues 295–349 (NILTMDEQIQRLKEAIASEKLQQEERSQIIKSLMEEELEINEQEEKIKHSFIDLD) adopt a coiled-coil conformation.

It is found in the cytoplasm. The protein localises to the nucleus. This is an uncharacterized protein from Schizosaccharomyces pombe (strain 972 / ATCC 24843) (Fission yeast).